Here is a 96-residue protein sequence, read N- to C-terminus: Large ribosomal subunit protein eL43 (96 aa).

The C4-type zinc finger occupies 41–62 (CPVCAFPKLKRAGTSIWVCEKC).

Belongs to the eukaryotic ribosomal protein eL43 family. Requires Zn(2+) as cofactor.

In Methanococcus maripaludis (strain C5 / ATCC BAA-1333), this protein is Large ribosomal subunit protein eL43.